Here is a 305-residue protein sequence, read N- to C-terminus: Superkiller complex protein 8 (305 aa).

WD repeat units lie at residues 14 to 57 (AHED…LELQ), 62 to 101 (GHQL…QIRA), 104 to 143 (AGPV…KEYS), 146 to 187 (TRGK…HTLE), 188 to 227 (GHAM…LAAT), 230 to 269 (GHGS…CVHT), and 272 to 305 (DHQD…DCPI).

The protein belongs to the SKI8 family. As to quaternary structure, component of the PAF1 complex. Component of the SKI complex.

The protein resides in the nucleus. It localises to the cytoplasm. Component of the PAF1 complex (PAF1C) which has multiple functions during transcription by RNA polymerase II and is implicated in regulation of development and maintenance of embryonic stem cell pluripotency. PAF1C associates with RNA polymerase II through interaction with POLR2A CTD non-phosphorylated and 'Ser-2'- and 'Ser-5'-phosphorylated forms and is involved in transcriptional elongation, acting both independently and synergistically with TCEA1 and in cooperation with the DSIF complex and HTATSF1. Also acts as a component of the SKI complex, a multiprotein complex that assists the RNA-degrading exosome during the mRNA decay and quality-control pathways. The SKI complex catalyzes mRNA extraction from 80S ribosomal complexes in the 3'-5' direction and channels mRNA to the cytosolic exosome for degradation. The sequence is that of Superkiller complex protein 8 (skic8) from Xenopus tropicalis (Western clawed frog).